Here is a 286-residue protein sequence, read N- to C-terminus: Shikimate dehydrogenase (NADP(+)) (286 aa).

Shikimate is bound by residues 20 to 22 (SLS) and Ser-67. Lys-71 functions as the Proton acceptor in the catalytic mechanism. Residues Asn-92 and Asp-107 each contribute to the shikimate site. NADP(+)-binding positions include 131–135 (GGGGA) and Ala-230. Residue Tyr-232 participates in shikimate binding. Gly-253 serves as a coordination point for NADP(+).

Belongs to the shikimate dehydrogenase family. As to quaternary structure, homodimer.

It carries out the reaction shikimate + NADP(+) = 3-dehydroshikimate + NADPH + H(+). It participates in metabolic intermediate biosynthesis; chorismate biosynthesis; chorismate from D-erythrose 4-phosphate and phosphoenolpyruvate: step 4/7. Functionally, involved in the biosynthesis of the chorismate, which leads to the biosynthesis of aromatic amino acids. Catalyzes the reversible NADPH linked reduction of 3-dehydroshikimate (DHSA) to yield shikimate (SA). This Lactococcus lactis subsp. lactis (strain IL1403) (Streptococcus lactis) protein is Shikimate dehydrogenase (NADP(+)).